We begin with the raw amino-acid sequence, 65 residues long: U11-theraphotoxin-Cg1a (65 aa).

An N-terminal signal peptide occupies residues 1–21 (MKTTILLVILGLTLLFALSAA). A propeptide spanning residues 22-29 (TELKDEER) is cleaved from the precursor. 3 disulfide bridges follow: cysteine 31/cysteine 45, cysteine 38/cysteine 50, and cysteine 44/cysteine 57.

The protein belongs to the neurotoxin 10 (Hwtx-1) family. 32 (Jztx-16) subfamily. Expressed by the venom gland.

It localises to the secreted. Probable ion channel inhibitor. The sequence is that of U11-theraphotoxin-Cg1a from Chilobrachys guangxiensis (Chinese earth tiger tarantula).